A 209-amino-acid chain; its full sequence is Orotate phosphoribosyltransferase (209 aa).

Residues Arg96, Lys100, His102, and 122–130 (EDLISTGGS) contribute to the 5-phospho-alpha-D-ribose 1-diphosphate site. Ser126 is a binding site for orotate.

Belongs to the purine/pyrimidine phosphoribosyltransferase family. PyrE subfamily. In terms of assembly, homodimer. Mg(2+) is required as a cofactor.

It carries out the reaction orotidine 5'-phosphate + diphosphate = orotate + 5-phospho-alpha-D-ribose 1-diphosphate. The protein operates within pyrimidine metabolism; UMP biosynthesis via de novo pathway; UMP from orotate: step 1/2. Catalyzes the transfer of a ribosyl phosphate group from 5-phosphoribose 1-diphosphate to orotate, leading to the formation of orotidine monophosphate (OMP). This is Orotate phosphoribosyltransferase from Lactococcus lactis subsp. lactis (strain IL1403) (Streptococcus lactis).